The following is a 60-amino-acid chain: Small ribosomal subunit protein bS21 (60 aa).

The protein belongs to the bacterial ribosomal protein bS21 family.

The sequence is that of Small ribosomal subunit protein bS21 (rpsU) from Mycoplasma pneumoniae (strain ATCC 29342 / M129 / Subtype 1) (Mycoplasmoides pneumoniae).